Consider the following 340-residue polypeptide: Phosphate carrier protein, mitochondrial (340 aa).

Residues 1 to 27 (MSVFSQLAESSKQNPFSLPVRSGNCAS) constitute a mitochondrion transit peptide. Solcar repeat units follow at residues 41–125 (KYYA…FKNV), 138–222 (YRTS…TVEA), and 239–317 (EQLV…VKVA). The next 6 membrane-spanning stretches (helical) occupy residues 47 to 67 (ALGGVLSCGITHTAIVPLDLV), 95 to 114 (RALVKGWAPTLLGYSAQGLG), 141 to 161 (SLYLAASASAEFFADILLAPM), 200 to 220 (PLWMRQIPYTMMKFACFEKTV), 241 to 261 (LVVTFVAGYIAGVFCAIVSHP), and 297 to 317 (IIMIGTLTALQWFIYDSVKVA).

Belongs to the mitochondrial carrier (TC 2.A.29) family.

It is found in the mitochondrion inner membrane. Functionally, transport of phosphate groups from the cytosol to the mitochondrial matrix. The protein is Phosphate carrier protein, mitochondrial of Caenorhabditis elegans.